We begin with the raw amino-acid sequence, 138 residues long: Large ribosomal subunit protein uL16 (138 aa).

The segment covering 1 to 13 (MLQPSRRKYRKEQ) has biased composition (basic residues). Residues 1–22 (MLQPSRRKYRKEQKGRNTGLAT) form a disordered region.

It belongs to the universal ribosomal protein uL16 family. Part of the 50S ribosomal subunit.

Its function is as follows. Binds 23S rRNA and is also seen to make contacts with the A and possibly P site tRNAs. This Bordetella petrii (strain ATCC BAA-461 / DSM 12804 / CCUG 43448) protein is Large ribosomal subunit protein uL16.